The primary structure comprises 116 residues: ADDRNPLEECFRETDYEEFLEIARNGLSDTDNPKEGWYANLGPMRLNEFSQENENAWYFIKDPGVLDYPVKPSEVGKHDDIFAYEKRFDEIVGGMDKEVTVTYQTSEKFEPPLPPK.

Residue 42–45 (GPMR) participates in FAD binding. Arginine 45 and histidine 78 together coordinate substrate.

This sequence belongs to the flavin monoamine oxidase family. FIG1 subfamily. As to quaternary structure, homodimer; non-covalently linked. It depends on FAD as a cofactor. Glycosylated. As to expression, expressed by the venom gland.

Its subcellular location is the secreted. The catalysed reaction is an L-alpha-amino acid + O2 + H2O = a 2-oxocarboxylate + H2O2 + NH4(+). The enzyme catalyses L-leucine + O2 + H2O = 4-methyl-2-oxopentanoate + H2O2 + NH4(+). It catalyses the reaction L-phenylalanine + O2 + H2O = 3-phenylpyruvate + H2O2 + NH4(+). It carries out the reaction L-methionine + O2 + H2O = 4-methylsulfanyl-2-oxobutanoate + H2O2 + NH4(+). The catalysed reaction is L-isoleucine + O2 + H2O = (S)-3-methyl-2-oxopentanoate + H2O2 + NH4(+). The enzyme catalyses L-histidine + O2 + H2O = 3-(imidazol-5-yl)pyruvate + H2O2 + NH4(+). It catalyses the reaction L-tyrosine + O2 + H2O = 3-(4-hydroxyphenyl)pyruvate + H2O2 + NH4(+). It carries out the reaction L-tryptophan + O2 + H2O = indole-3-pyruvate + H2O2 + NH4(+). Its enzymatic activities is reduced by the presence of Zn(2+), Al(3+), Cu(2+), Na(+) or Ni(2+) salts. In terms of biological role, catalyzes an oxidative deamination of predominantly hydrophobic and aromatic L-amino acids, thus producing hydrogen peroxide that may contribute to the diverse toxic effects of this enzyme. Shows very high enzymatic activity on L-Met and L-Leu, high activity on L-Ile, L-Phe and L-Tyr and moderate activity on L-His. Exhibits diverse biological activities, such as hemorrhage, hemolysis, edema, apoptosis of vascular endothelial cells or tumor cell lines, and antibacterial, as well as regulation of platelet aggregation. Effects of snake L-amino oxidases on platelets are controversial, since they either induce aggregation or inhibit agonist-induced aggregation. These different effects are probably due to different experimental conditions. In vitro, has a strong antiprotozoal effect against Leishmania amazonensis (IC(50)=4.56 ug/mL) and Trypanosoma cruzi (IC(50)=4.85 ug/mL). It also causes cell death and DNA damage in hepatocarcinoma cells (HepG2) in vitro by inducing oxidative stress. It exerts cytotoxicity towards colorectal adenocarcinomahuman cells (Caco-2) by acting on multiple intracellular targets. It diminishes cell viability by decreasing mitochondrial activity, the activity of acid phosphatases, and lysosomal function. In addition, it increases intracellular levels of reactive oxygen species and DNA damage, it elevates the expression of the pro-inflammatory cytokine genes TNF and IL6, and lowers the expression of the apoptotic-related genes. Also induces cytotoxicity (IC(50)=1.80 ug/mL) and apoptosis in MCF-7 cells (a human breast adeno-carcinoma cell line) by activating the intrinsic and extrinsic apoptosis pathways, but are not cytotoxic towards MCF-10A cells (a non-tumorigenic human breast epithelial cell line). The sequence is that of L-amino-acid oxidase BjussuLAAO-II from Bothrops jararacussu (Jararacussu).